Here is a 156-residue protein sequence, read N- to C-terminus: Nucleoredoxin-like protein 2 (156 aa).

The 139-residue stretch at Arg-9 to Ala-147 folds into the Thioredoxin domain.

Belongs to the nucleoredoxin family. As to expression, both isoforms are expressed in retina, in the photoreceptor layer, and throughout the olfactory sensory neuron layer of the nasal epithelium, in neurons. Also expressed at low levels in brain and testis.

May be involved in the maintenance of both the function and the viability of sensory neurons, including photoreceptors and olfactory neurons. In the retina, isoform 1 may be required for rod function and isoform 2 for cone viability and function. The sequence is that of Nucleoredoxin-like protein 2 (Nxnl2) from Mus musculus (Mouse).